A 306-amino-acid chain; its full sequence is Nuclear egress protein 1 (306 aa).

The disordered stretch occupies residues methionine 1–arginine 49. The CCCH-type zinc finger occupies cysteine 106–histidine 225.

It belongs to the herpesviridae NEC1 protein family. As to quaternary structure, forms a heterohexameric complex with NEC2. Interacts with capsid vertex specific component 2/CVC2; this interaction directs the capsid to the host inner nuclear membrane to initiate budding. Post-translationally, phosphorylated at serine residues in the N-terminus. This phosphorylation regulates the localization within the inner nuclear membrane.

It localises to the host nucleus inner membrane. Its function is as follows. Plays an essential role in virion nuclear egress, the first step of virion release from infected cell. Within the host nucleus, NEC1 interacts with the newly formed capsid through the vertexes and directs it to the inner nuclear membrane by associating with NEC2. Induces the budding of the capsid at the inner nuclear membrane as well as its envelopment into the perinuclear space. There, the NEC1/NEC2 complex promotes the fusion of the enveloped capsid with the outer nuclear membrane and the subsequent release of the viral capsid into the cytoplasm where it will reach the secondary budding sites in the host Golgi or trans-Golgi network. This Human herpesvirus 1 (strain 17) (HHV-1) protein is Nuclear egress protein 1.